Here is a 693-residue protein sequence, read N- to C-terminus: Zinc finger protein 441 (693 aa).

The 76-residue stretch at 4-79 (VAFEDVAINF…ERACEIKDNS (76 aa)) folds into the KRAB domain. Residues 169–190 (YDCKECASFSSLENLQRHMAAH) form a C2H2-type 1 zinc finger. The C2H2-type 2; degenerate zinc-finger motif lies at 196-218 (RICKLCGNAFIWPSLFHMLRRTH). The segment at 224-246 (YEYEQCSTAFPAYSSTLRHERTH) adopts a C2H2-type 3; degenerate zinc-finger fold. The C2H2-type 4; degenerate zinc finger occupies 252–274 (YQCKQCGKAFSCSCYTQLYERTH). C2H2-type zinc fingers lie at residues 280 to 302 (YECK…MIVH), 308 to 330 (HKCK…KRTH), 336 to 358 (YECK…MITH), 364 to 386 (HKCK…ETTH), 392 to 413 (YKCE…ETTH), 419 to 441 (YKCK…ERIH), 447 to 469 (YKCK…EKTH), 475 to 497 (YECK…MIMH), 503 to 525 (HKCK…ERIH), 531 to 553 (YKCK…ERTH), 559 to 581 (YGCQ…MITH), 587 to 609 (HKCK…ERTH), 615 to 637 (YECK…ERVH), 643 to 665 (YKCK…ERTH), and 671 to 693 (YKCK…EMTH).

Belongs to the krueppel C2H2-type zinc-finger protein family.

It localises to the nucleus. May be involved in transcriptional regulation. In Homo sapiens (Human), this protein is Zinc finger protein 441 (ZNF441).